Consider the following 401-residue polypeptide: Na(+)/H(+) antiporter NhaA 2 (401 aa).

11 consecutive transmembrane segments (helical) span residues 13–33 (AAGG…ANSP), 59–79 (LLLW…GLEV), 94–114 (ITLP…IYVW), 125–145 (GWAI…TIFG), 154–174 (LFLL…IALF), 178–198 (DLST…FLLN), 209–229 (VLIG…ATLA), 260–280 (WVGF…SLFG), 292–312 (LGIA…VCWI), 332–352 (GVSL…SLAF), and 363–383 (VKAG…VLLA).

It belongs to the NhaA Na(+)/H(+) (TC 2.A.33) antiporter family.

It is found in the cell inner membrane. It catalyses the reaction Na(+)(in) + 2 H(+)(out) = Na(+)(out) + 2 H(+)(in). In terms of biological role, na(+)/H(+) antiporter that extrudes sodium in exchange for external protons. In Pseudoalteromonas atlantica (strain T6c / ATCC BAA-1087), this protein is Na(+)/H(+) antiporter NhaA 2.